The sequence spans 963 residues: Transcription factor cbf12 (963 aa).

Disordered regions lie at residues 130-207 (NPSN…SQGL) and 248-289 (VNMN…PPQK). Polar residues-rich tracts occupy residues 143 to 207 (FENN…SQGL) and 249 to 289 (NMNS…PPQK).

This sequence belongs to the Su(H) family.

The protein resides in the nucleus. Its function is as follows. Transcription factor which function may be to trigger the increase of adhesion at stationary phase, possibly by counteracting or replacing cbf11 at the respective promoters. May also play a cbf11-antagonistic role in the regulation of a number of other important processes such as extracellular material production, colony morphogenesis, ploidy maintenance, or meiosis. The sequence is that of Transcription factor cbf12 (cbf12) from Schizosaccharomyces pombe (strain 972 / ATCC 24843) (Fission yeast).